A 504-amino-acid polypeptide reads, in one-letter code: Maturase K (504 aa).

The protein belongs to the intron maturase 2 family. MatK subfamily.

It is found in the plastid. The protein localises to the chloroplast. In terms of biological role, usually encoded in the trnK tRNA gene intron. Probably assists in splicing its own and other chloroplast group II introns. This Alliaria petiolata (Garlic mustard) protein is Maturase K.